Consider the following 490-residue polypeptide: GTPase Der (490 aa).

2 EngA-type G domains span residues 3 to 166 (PVVA…MDDV) and 203 to 376 (IKLA…DSST). Residues 9–16 (GRPNVGKS), 56–60 (DTGGI), 118–121 (NKTD), 209–216 (GRPNVGKS), 256–260 (DTAGV), and 321–324 (NKWD) each bind GTP. Residues 377-461 (RRVSTAMLTR…PIRIQFKEGE (85 aa)) enclose the KH-like domain.

This sequence belongs to the TRAFAC class TrmE-Era-EngA-EngB-Septin-like GTPase superfamily. EngA (Der) GTPase family. As to quaternary structure, associates with the 50S ribosomal subunit.

GTPase that plays an essential role in the late steps of ribosome biogenesis. This chain is GTPase Der, found in Salmonella newport (strain SL254).